The sequence spans 401 residues: Imidazolonepropionase (401 aa).

The Fe(3+) site is built by His-66 and His-68. Zn(2+) is bound by residues His-66 and His-68. Positions 75, 138, and 171 each coordinate 4-imidazolone-5-propanoate. Tyr-138 lines the N-formimidoyl-L-glutamate pocket. His-236 serves as a coordination point for Fe(3+). A Zn(2+)-binding site is contributed by His-236. Residue Gln-239 coordinates 4-imidazolone-5-propanoate. Asp-311 contributes to the Fe(3+) binding site. Zn(2+) is bound at residue Asp-311. Residues Asn-313 and Gly-315 each coordinate N-formimidoyl-L-glutamate. Thr-316 serves as a coordination point for 4-imidazolone-5-propanoate.

Belongs to the metallo-dependent hydrolases superfamily. HutI family. Zn(2+) is required as a cofactor. Requires Fe(3+) as cofactor.

Its subcellular location is the cytoplasm. It carries out the reaction 4-imidazolone-5-propanoate + H2O = N-formimidoyl-L-glutamate. The protein operates within amino-acid degradation; L-histidine degradation into L-glutamate; N-formimidoyl-L-glutamate from L-histidine: step 3/3. Catalyzes the hydrolytic cleavage of the carbon-nitrogen bond in imidazolone-5-propanoate to yield N-formimidoyl-L-glutamate. It is the third step in the universal histidine degradation pathway. The protein is Imidazolonepropionase of Pseudomonas syringae pv. tomato (strain ATCC BAA-871 / DC3000).